The chain runs to 1207 residues: Dermatan-sulfate epimerase-like protein (1207 aa).

The signal sequence occupies residues 1–22; that stretch reads MAFMFTEHLLFLTLMMCSFSTC. N-linked (GlcNAc...) asparagine glycans are attached at residues Asn28, Asn661, Asn683, and Asn704. 2 helical membrane passes run 761-781 and 798-818; these read FPFG…SLVI and CVLI…WSTC. N-linked (GlcNAc...) asparagine glycosylation occurs at Asn869.

It belongs to the dermatan-sulfate isomerase family.

Its subcellular location is the membrane. The polypeptide is Dermatan-sulfate epimerase-like protein (Dsel) (Mus musculus (Mouse)).